Here is a 417-residue protein sequence, read N- to C-terminus: Serine--tRNA ligase (417 aa).

Position 226–228 (226–228) interacts with L-serine; the sequence is TSE. Residues 257 to 259 and Val-273 each bind ATP; that span reads RRE. Glu-280 serves as a coordination point for L-serine. 344-347 serves as a coordination point for ATP; sequence ELTS. Thr-379 contributes to the L-serine binding site.

Belongs to the class-II aminoacyl-tRNA synthetase family. Type-1 seryl-tRNA synthetase subfamily. As to quaternary structure, homodimer. The tRNA molecule binds across the dimer.

The protein resides in the cytoplasm. The enzyme catalyses tRNA(Ser) + L-serine + ATP = L-seryl-tRNA(Ser) + AMP + diphosphate + H(+). The catalysed reaction is tRNA(Sec) + L-serine + ATP = L-seryl-tRNA(Sec) + AMP + diphosphate + H(+). It participates in aminoacyl-tRNA biosynthesis; selenocysteinyl-tRNA(Sec) biosynthesis; L-seryl-tRNA(Sec) from L-serine and tRNA(Sec): step 1/1. Its function is as follows. Catalyzes the attachment of serine to tRNA(Ser). Is also able to aminoacylate tRNA(Sec) with serine, to form the misacylated tRNA L-seryl-tRNA(Sec), which will be further converted into selenocysteinyl-tRNA(Sec). This chain is Serine--tRNA ligase, found in Mycobacterium sp. (strain JLS).